The following is a 562-amino-acid chain: Protein TBF1 (562 aa).

The interval 376–414 (ASMSNSSSGPHSSHNNSSNSNNNGSIGLRKPKAKRTWSK) is disordered. Residues 377-400 (SMSNSSSGPHSSHNNSSNSNNNGS) show a composition bias toward low complexity. Residues 404-460 (RKPKAKRTWSKEEEEALVEGLKEVGPSWSKILDLYGPGGKITENLKNRTQVQLKDKA) form the HTH myb-type domain. A DNA-binding region (H-T-H motif) is located at residues 431–456 (WSKILDLYGPGGKITENLKNRTQVQL). The segment at 495–562 (FSQSPNSSTI…GFDPHLEDGM (68 aa)) is disordered. 2 stretches are compositionally biased toward polar residues: residues 496-522 (SQSP…ATED) and 532-552 (GQNS…SDNT).

Homodimer.

The protein resides in the nucleus. The protein localises to the chromosome. Its subcellular location is the telomere. In terms of biological role, binds the telomeric double-stranded TTAGGG repeat and negatively regulates telomere length. Involved in the regulation of gene expression. 52 binding sites have been identified, distributed over 15 chromosomes. A member of the general regulatory factors (GRFs) which act as genome partitioners. Acts as a chromatin insulator which are known as STARs (Subtelomeric anti-silencing region). STARs prevent negative or positive transcription influence by extending across chromatin to a promoter. This chain is Protein TBF1 (TBF1), found in Saccharomyces cerevisiae (strain ATCC 204508 / S288c) (Baker's yeast).